The sequence spans 301 residues: Protein KTI12 homolog (301 aa).

Residue 8–15 participates in ATP binding; it reads GQPCSGKS. The calmodulin-binding stretch occupies residues 262-275; sequence LRRTFIKLAGQYSL.

It belongs to the KTI12 family. In terms of assembly, interacts with the elongator complex. Binds to calmodulin in a calcium-dependent manner.

It is found in the cytoplasm. The protein localises to the nucleus. Its function is as follows. Elongator complex-associated factor that is not a structural subunit but rather transiently contacts the complex. Regulates both meristem activity and organ growth; acts as a positive regulator of adaxial leaf patterning. Required for an early step in synthesis of 5-carbamoylmethyl (ncm5) groups present on uridines (ncm5U) at the wobble position in tRNA. The polypeptide is Protein KTI12 homolog (Oryza sativa subsp. indica (Rice)).